The primary structure comprises 391 residues: Cyclin-B1-2 (391 aa).

It belongs to the cyclin family. Cyclin AB subfamily.

This chain is Cyclin-B1-2 (CYCB1-2), found in Oryza sativa subsp. japonica (Rice).